The following is a 55-amino-acid chain: Small polypeptide DEVIL 10 (55 aa).

Asn7 carries an N-linked (GlcNAc...) asparagine glycan. Positions 19-50 (RFGDRCLLMAKQQRTRLYILRRCVSMLLCWHD) are required for DVL/RTFL small polypeptide activity. The chain crosses the membrane as a helical span at residues 32 to 48 (RTRLYILRRCVSMLLCW).

This sequence belongs to the DVL/RTFL small polypeptides family.

The protein resides in the cell membrane. In terms of biological role, small polypeptide acting as a regulatory molecule which coordinates cellular responses required for differentiation, growth and development, probably by restricting polar cell proliferation in lateral organs and coordinating socket cell recruitment and differentiation at trichome sites. In Arabidopsis thaliana (Mouse-ear cress), this protein is Small polypeptide DEVIL 10.